Reading from the N-terminus, the 264-residue chain is H-2 class II histocompatibility antigen, I-E beta chain (264 aa).

The N-terminal stretch at 1 to 31 is a signal peptide; it reads MVWLPRVPCVAAVILLLTVLSPPVALVRNSR. A beta-1 region spans residues 32 to 121; the sequence is PRFLEYSTSE…IFDNFLVPRR (90 aa). Over 32–225 the chain is Extracellular; sequence PRFLEYSTSE…KAQSTSAQNK (194 aa). 2 disulfides stabilise this stretch: Cys-42–Cys-106 and Cys-144–Cys-200. Asn-46 carries an N-linked (GlcNAc...) asparagine glycan. Residues 122–215 are beta-2; sequence VEPTVTVYPT…SLTDPVTVEW (94 aa). The Ig-like C1-type domain maps to 124-214; sequence PTVTVYPTKT…PSLTDPVTVE (91 aa). The segment at 216–225 is connecting peptide; it reads KAQSTSAQNK. The chain crosses the membrane as a helical span at residues 226–248; the sequence is MLSGVGGFVLGLLFLGAGLFIYF. Residues 249–264 are Cytoplasmic-facing; it reads RNQKGQSGLQPTGLLS.

The protein belongs to the MHC class II family. In terms of processing, ubiquitinated in immature dendritic cells leading to down-regulation of MHC class II.

The protein localises to the membrane. This is H-2 class II histocompatibility antigen, I-E beta chain (H2-Eb1) from Mus musculus (Mouse).